Reading from the N-terminus, the 2671-residue chain is Stalled ribosome sensor GCN1 (2671 aa).

Ala2 bears the N-acetylalanine mark. HEAT repeat units follow at residues Asn140–Gly178, Glu257–Ser293, Gln294–Asp331, Ile385–Lys423, Leu425–Leu459, Leu460–Asp503, Asn560–Gly597, Lys599–Ala636, Asp697–Val732, and Leu733–Ala770. A Phosphoserine modification is found at Ser729. At Ser786 the chain carries Phosphoserine. A coiled-coil region spans residues Gln804 to Asp863. HEAT repeat units follow at residues Val879–Leu925, Ser979–Leu1016, Leu1035–Gly1072, Phe1078–Ala1115, Asp1155–Arg1192, Tyr1210–Ser1250, Ser1251–Lys1289, Glu1290–Lys1332, Pro1335–Glu1372, Ala1374–Ile1410, Leu1413–Lys1451, Pro1455–Ala1492, His1493–Lys1530, Ser1534–Asn1571, Glu1573–Asp1609, Pro1611–Gln1648, Pro1653–Glu1690, Cys1692–Val1729, Lys1731–Asp1769, Pro1773–Glu1810, Ala1812–Gly1848, Glu1921–Glu1958, Lys1959–Arg1996, Tyr2001–His2038, Gln2039–Val2076, Pro2078–Thr2106, Arg2107–Asp2146, Thr2147–Ala2184, Ser2188–Ala2225, Lys2259–Ala2296, Pro2301–Gly2338, Ile2339–Lys2380, Asp2382–Ala2417, Val2422–Glu2459, Gln2546–Pro2583, and Gln2588–Gly2625. The tract at residues Gly2260 to Leu2408 is RWDBD region. Ser2276 is subject to Phosphoserine. One copy of the HEAT 47; degenerate repeat lies at Glu2627 to Ser2661.

The protein belongs to the GCN1 family. Interacts with EIF2AK4/GCN2; this interaction stimulates the EIF2AK4/GCN2 kinase activity and is impaired by IMPACT upon a variety of stress conditions, such as amino acid depletion, UV-C irradiation, proteasome inhibitor treatment and glucose deprivation. Interacts with IMPACT; this prevents the interaction of GCN1 with EIF2AK4/GCN2 and inhibits EIF2AK4/GCN2 kinase activity. Interacts with RNF14; interaction takes place following ribosome stalling and promotes recruitment of RNF14. In terms of tissue distribution, ubiquitously expressed. Expressed in skeletal muscules, ovary and testis.

The protein localises to the cytoplasm. Ribosome collision sensor that plays a key role in the RNF14-RNF25 translation quality control pathway, a pathway that takes place when a ribosome has stalled during translation, and which promotes ubiquitination and degradation of translation factors on stalled ribosomes. Directly binds to the ribosome and acts as a sentinel for colliding ribosomes: activated following ribosome stalling and promotes recruitment of RNF14, which directly ubiquitinates EEF1A1/eEF1A, leading to its degradation. In addition to EEF1A1/eEF1A, the RNF14-RNF25 translation quality control pathway mediates degradation of ETF1/eRF1 and ubiquitination of ribosomal protein. GCN1 also acts as a positive activator of the integrated stress response (ISR) by mediating activation of EIF2AK4/GCN2 in response to amino acid starvation. Interaction with EIF2AK4/GCN2 on translating ribosomes stimulates EIF2AK4/GCN2 kinase activity, leading to phosphorylation of eukaryotic translation initiation factor 2 (eIF-2-alpha/EIF2S1). EIF2S1/eIF-2-alpha phosphorylation converts EIF2S1/eIF-2-alpha into a global protein synthesis inhibitor, leading to a global attenuation of cap-dependent translation, and thus to a reduced overall utilization of amino acids, while concomitantly initiating the preferential translation of ISR-specific mRNAs, such as the transcriptional activator ATF4, and hence allowing ATF4-mediated reprogramming of amino acid biosynthetic gene expression to alleviate nutrient depletion. This Homo sapiens (Human) protein is Stalled ribosome sensor GCN1.